We begin with the raw amino-acid sequence, 506 residues long: Maturase K (506 aa).

The protein belongs to the intron maturase 2 family. MatK subfamily.

It localises to the plastid. The protein resides in the chloroplast. Its function is as follows. Usually encoded in the trnK tRNA gene intron. Probably assists in splicing its own and other chloroplast group II introns. The chain is Maturase K from Jurinea cyanoides.